The following is a 133-amino-acid chain: ATP synthase epsilon chain, chloroplastic (133 aa).

It belongs to the ATPase epsilon chain family. As to quaternary structure, F-type ATPases have 2 components, CF(1) - the catalytic core - and CF(0) - the membrane proton channel. CF(1) has five subunits: alpha(3), beta(3), gamma(1), delta(1), epsilon(1). CF(0) has three main subunits: a, b and c.

The protein resides in the plastid. Its subcellular location is the chloroplast thylakoid membrane. Functionally, produces ATP from ADP in the presence of a proton gradient across the membrane. The sequence is that of ATP synthase epsilon chain, chloroplastic from Morus indica (Mulberry).